Here is a 424-residue protein sequence, read N- to C-terminus: Putative fasciclin-like arabinogalactan protein 20 (424 aa).

The chain crosses the membrane as a helical span at residues 46 to 66 (LLTTFFLIFFVLDIDLVATSM). The FAS1 1 domain occupies 56–194 (VLDIDLVATS…YVVIYGSDEF (139 aa)). 2 N-linked (GlcNAc...) asparagine glycosylation sites follow: Asn153 and Asn160. Low complexity predominate over residues 199 to 226 (TKISDDSSSSSSIPSTTSSTGSIPIPSS). The segment at 199-246 (TKISDDSSSSSSIPSTTSSTGSIPIPSSATQTPPSPNIASDSTRNLPN) is disordered. Polar residues predominate over residues 227-246 (ATQTPPSPNIASDSTRNLPN). Residues Asn246, Asn283, and Asn287 are each glycosylated (N-linked (GlcNAc...) asparagine). An FAS1 2 domain is found at 250-384 (PVNRFNIFES…IAVHGFNQMI (135 aa)). The interval 405 to 424 (QEEEGVHGEYSSELGDYGLH) is disordered.

It belongs to the fasciclin-like AGP family.

Its subcellular location is the membrane. Its function is as follows. May be a cell surface adhesion protein. This is Putative fasciclin-like arabinogalactan protein 20 (FLA20) from Arabidopsis thaliana (Mouse-ear cress).